The following is a 307-amino-acid chain: 4-hydroxybenzoate geranyltransferase 1 (307 aa).

8 helical membrane-spanning segments follow: residues Pro-38–Leu-58, Pro-62–Ile-82, Leu-120–Val-140, Ile-154–Ser-174, Gly-179–Val-199, Met-230–Leu-250, Ile-252–Phe-272, and Phe-286–Phe-306.

The protein belongs to the UbiA prenyltransferase family. Requires Mg(2+) as cofactor. In terms of tissue distribution, expressed only in roots.

It is found in the endoplasmic reticulum membrane. The enzyme catalyses 4-hydroxybenzoate + (2E)-geranyl diphosphate = 3-geranyl-4-hydroxybenzoate + diphosphate. Its function is as follows. Prenyltransferase involved in the biosynthesis of shikonin, a naphthoquinone secondary metabolite. Could accept only geranyl diphosphate and not dimethylallyl diphosphate, farnesyl diphosphate, or geranylgeranyl diphosphate as substrate. The sequence is that of 4-hydroxybenzoate geranyltransferase 1 (PGT-1) from Lithospermum erythrorhizon (Purple gromwell).